Here is a 189-residue protein sequence, read N- to C-terminus: Peptidyl-tRNA hydrolase (189 aa).

Residue Tyr-15 participates in tRNA binding. Residue His-20 is the Proton acceptor of the active site. The tRNA site is built by Phe-66, Asn-68, and Asn-114.

The protein belongs to the PTH family. Monomer.

The protein resides in the cytoplasm. The catalysed reaction is an N-acyl-L-alpha-aminoacyl-tRNA + H2O = an N-acyl-L-amino acid + a tRNA + H(+). Its function is as follows. Hydrolyzes ribosome-free peptidyl-tRNAs (with 1 or more amino acids incorporated), which drop off the ribosome during protein synthesis, or as a result of ribosome stalling. Catalyzes the release of premature peptidyl moieties from peptidyl-tRNA molecules trapped in stalled 50S ribosomal subunits, and thus maintains levels of free tRNAs and 50S ribosomes. This Streptococcus pyogenes serotype M6 (strain ATCC BAA-946 / MGAS10394) protein is Peptidyl-tRNA hydrolase.